An 85-amino-acid polypeptide reads, in one-letter code: Large ribosomal subunit protein bL27 (85 aa).

Positions 1–21 (MAHKKAAGSTKNGRDSNAKRL) are disordered.

Belongs to the bacterial ribosomal protein bL27 family.

In Hydrogenovibrio crunogenus (strain DSM 25203 / XCL-2) (Thiomicrospira crunogena), this protein is Large ribosomal subunit protein bL27.